Reading from the N-terminus, the 306-residue chain is Lymphotoxin-beta (306 aa).

The Cytoplasmic portion of the chain corresponds to 1-27 (MGTRGLQGLGGRPQGRGCLLLAVAGAT). Residues 28 to 48 (SLVTLLLAVPITVLAVLALVP) form a helical; Signal-anchor for type II membrane protein membrane-spanning segment. At 49–306 (QDQGRRVEKI…KTFFGAVMVG (258 aa)) the chain is on the extracellular side. Disordered stretches follow at residues 63 to 112 (AQAQ…GPVA) and 127 to 151 (PAAD…DLNP). Over residues 74 to 85 (PSCILPSPSSLS) the composition is skewed to low complexity. Positions 95–112 (QRSNASRNLASTSQGPVA) are enriched in polar residues. A glycan (N-linked (GlcNAc...) asparagine) is linked at Asn-98. The THD domain maps to 154–305 (PAAHLIGAWM…GKTFFGAVMV (152 aa)). N-linked (GlcNAc...) asparagine glycosylation is present at Asn-284.

This sequence belongs to the tumor necrosis factor family. In terms of assembly, heterotrimer of either two LTB and one LTA subunits or (less prevalent) two LTA and one LTB subunits.

It is found in the membrane. Its function is as follows. Cytokine that binds to LTBR/TNFRSF3. May play a specific role in immune response regulation. Provides the membrane anchor for the attachment of the heterotrimeric complex to the cell surface. The sequence is that of Lymphotoxin-beta (Ltb) from Mus musculus (Mouse).